Consider the following 159-residue polypeptide: Ribosomal RNA large subunit methyltransferase H (159 aa).

Residues leucine 76, glycine 108, and 127–132 (FSKMTL) each bind S-adenosyl-L-methionine.

Belongs to the RNA methyltransferase RlmH family. In terms of assembly, homodimer.

The protein resides in the cytoplasm. The catalysed reaction is pseudouridine(1915) in 23S rRNA + S-adenosyl-L-methionine = N(3)-methylpseudouridine(1915) in 23S rRNA + S-adenosyl-L-homocysteine + H(+). In terms of biological role, specifically methylates the pseudouridine at position 1915 (m3Psi1915) in 23S rRNA. In Bacillus mycoides (strain KBAB4) (Bacillus weihenstephanensis), this protein is Ribosomal RNA large subunit methyltransferase H.